A 114-amino-acid chain; its full sequence is uncharacterized protein (114 aa).

This is an uncharacterized protein from Schizosaccharomyces pombe (strain 972 / ATCC 24843) (Fission yeast).